The primary structure comprises 100 residues: Urease subunit gamma 2 (100 aa).

It belongs to the urease gamma subunit family. In terms of assembly, heterotrimer of UreA (gamma), UreB (beta) and UreC (alpha) subunits. Three heterotrimers associate to form the active enzyme.

The protein resides in the cytoplasm. The enzyme catalyses urea + 2 H2O + H(+) = hydrogencarbonate + 2 NH4(+). The protein operates within nitrogen metabolism; urea degradation; CO(2) and NH(3) from urea (urease route): step 1/1. Disrupting the ure2 operon has no effect on urease activity or pathogen survival in BALB/c mice when administered orally. The chain is Urease subunit gamma 2 from Brucella abortus (strain 2308).